Here is a 143-residue protein sequence, read N- to C-terminus: Putative pre-16S rRNA nuclease (143 aa).

It belongs to the YqgF nuclease family.

It is found in the cytoplasm. Functionally, could be a nuclease involved in processing of the 5'-end of pre-16S rRNA. In Ralstonia pickettii (strain 12J), this protein is Putative pre-16S rRNA nuclease.